The chain runs to 267 residues: Undecaprenyl-diphosphatase (267 aa).

7 helical membrane-spanning segments follow: residues 39 to 59 (QGLA…ILYF), 87 to 107 (WMIA…KDFI), 111 to 131 (LRSA…LWWV), 149 to 169 (ALFI…RSGA), 189 to 209 (FLMS…KLVT), 218 to 238 (ALSI…HAFL), and 244 to 264 (VGMM…IAFL).

This sequence belongs to the UppP family.

The protein localises to the cell inner membrane. It carries out the reaction di-trans,octa-cis-undecaprenyl diphosphate + H2O = di-trans,octa-cis-undecaprenyl phosphate + phosphate + H(+). In terms of biological role, catalyzes the dephosphorylation of undecaprenyl diphosphate (UPP). Confers resistance to bacitracin. The sequence is that of Undecaprenyl-diphosphatase from Photobacterium profundum (strain SS9).